We begin with the raw amino-acid sequence, 425 residues long: Histidine--tRNA ligase (425 aa).

This sequence belongs to the class-II aminoacyl-tRNA synthetase family. Homodimer.

Its subcellular location is the cytoplasm. It catalyses the reaction tRNA(His) + L-histidine + ATP = L-histidyl-tRNA(His) + AMP + diphosphate + H(+). This is Histidine--tRNA ligase from Shewanella sp. (strain W3-18-1).